A 162-amino-acid chain; its full sequence is Disulfide bond formation protein B (162 aa).

Residues 1 to 8 lie on the Cytoplasmic side of the membrane; sequence MTPLFRKA. Residues 9-25 traverse the membrane as a helical segment; it reads VWLLFAVSVCAFAGSLA. The Periplasmic portion of the chain corresponds to 26-43; it reads AQYVLGMEPCVLCISQRL. Residues C35 and C38 are joined by a disulfide bond. A helical transmembrane segment spans residues 44 to 60; it reads CVLATALCTAIVLMCRP. At 61 to 67 the chain is on the cytoplasmic side; the sequence is RRRAGGL. Residues 68-85 form a helical membrane-spanning segment; that stretch reads FGAVFISIPAVTGISVAA. At 86-141 the chain is on the periplasmic side; the sequence is YQLWLQSLPPGTAPSCGAPWTFRLKGWPLFDWFEPVVRGFGNCAEPDYLLGIALPV. C101 and C128 form a disulfide bridge. The helical transmembrane segment at 142–160 threads the bilayer; sequence WSVAYFLAVVLTVWWAWAR. Residues 161–162 lie on the Cytoplasmic side of the membrane; sequence AK.

This sequence belongs to the DsbB family.

It is found in the cell inner membrane. Its function is as follows. Required for disulfide bond formation in some periplasmic proteins. Acts by oxidizing the DsbA protein. The chain is Disulfide bond formation protein B from Neisseria meningitidis serogroup B (strain ATCC BAA-335 / MC58).